A 603-amino-acid chain; its full sequence is Beta-hexosaminidase (603 aa).

The first 19 residues, 1–19 (MAYFRLYAVLLAVASSVAA), serve as a signal peptide directing secretion. Active-site charge relay system residues include D225, H278, and E349. A disulfide bridge links C293 with C354. An N-linked (GlcNAc...) asparagine glycan is attached at N356. C451 and C486 form a disulfide bridge. N-linked (GlcNAc...) asparagine glycans are attached at residues N503 and N528. C586 and C593 form a disulfide bridge.

Belongs to the glycosyl hydrolase 20 family. In terms of assembly, homodimer.

The protein localises to the secreted. The enzyme catalyses Hydrolysis of terminal non-reducing N-acetyl-D-hexosamine residues in N-acetyl-beta-D-hexosaminides.. In terms of biological role, part of the binary chitinolytic system. Involved in hydrolysis of chitobiose and higher chito-oligomers (produced from cell wall chitin by endochitinases), thus contributing to the formation of germ tubes, fruit-bodies and septa during hyphenation. Hydrolyzes synthetic substrates p-nitrophenyl-beta-N-acetyl-glucosamine (pNP-beta-GlcNAc), p-nitrophenyl-beta-N-acetyl-galactosamine (pNP-beta-GalNAc) and 5-bromo-4-chloro-3-indoyl-beta-D-N-glucosaminide (X-GlcNAc). The sequence is that of Beta-hexosaminidase from Emericella nidulans (Aspergillus nidulans).